The following is a 262-amino-acid chain: Phosphate import ATP-binding protein PstB 2 (262 aa).

One can recognise an ABC transporter domain in the interval 18–257 (FVVRNLDLFY…PSDRRTEDYI (240 aa)). 50–57 (GPSGCGKS) provides a ligand contact to ATP.

The protein belongs to the ABC transporter superfamily. Phosphate importer (TC 3.A.1.7) family. The complex is composed of two ATP-binding proteins (PstB), two transmembrane proteins (PstC and PstA) and a solute-binding protein (PstS).

The protein localises to the cell membrane. It catalyses the reaction phosphate(out) + ATP + H2O = ADP + 2 phosphate(in) + H(+). Its function is as follows. Part of the ABC transporter complex PstSACB involved in phosphate import. Responsible for energy coupling to the transport system. The protein is Phosphate import ATP-binding protein PstB 2 of Symbiobacterium thermophilum (strain DSM 24528 / JCM 14929 / IAM 14863 / T).